A 388-amino-acid polypeptide reads, in one-letter code: Phosphopentomutase (388 aa).

Mn(2+) is bound by residues Asp-10, Asp-282, His-287, Asp-323, His-324, and His-335.

Belongs to the phosphopentomutase family. The cofactor is Mn(2+).

The protein localises to the cytoplasm. It catalyses the reaction 2-deoxy-alpha-D-ribose 1-phosphate = 2-deoxy-D-ribose 5-phosphate. It carries out the reaction alpha-D-ribose 1-phosphate = D-ribose 5-phosphate. It functions in the pathway carbohydrate degradation; 2-deoxy-D-ribose 1-phosphate degradation; D-glyceraldehyde 3-phosphate and acetaldehyde from 2-deoxy-alpha-D-ribose 1-phosphate: step 1/2. Isomerase that catalyzes the conversion of deoxy-ribose 1-phosphate (dRib-1-P) and ribose 1-phosphate (Rib-1-P) to deoxy-ribose 5-phosphate (dRib-5-P) and ribose 5-phosphate (Rib-5-P), respectively. The polypeptide is Phosphopentomutase (Carboxydothermus hydrogenoformans (strain ATCC BAA-161 / DSM 6008 / Z-2901)).